A 1616-amino-acid chain; its full sequence is S-layer-related protein (1616 aa).

The first 30 residues, 1–30 (MKSLLRKWNGMMIIALVISLLTPAWGKASA), serve as a signal peptide directing secretion. In terms of domain architecture, BIG2 spans 1115–1185 (VKALKLDRGT…GSGTVQATYE (71 aa)). Disordered regions lie at residues 1191 to 1244 (ARVS…DGRN), 1372 to 1455 (NKRN…GRAR), 1523 to 1554 (ARGR…REAG), and 1585 to 1616 (FAGG…ARPC). Gly residues predominate over residues 1199–1225 (STGGGSDTGSGTGSGSGGGSAGGGGTA). Over residues 1372–1387 (NKRNRRLRKLRPKNRK) the composition is skewed to basic residues. The segment covering 1406–1416 (PPECSASCPPA) has biased composition (low complexity). The SLH domain maps to 1438-1502 (WSPPRSASPT…ALDPAPAAAD (65 aa)). Residues 1536–1554 (RGADTRTDERDAHARREAG) show a composition bias toward basic and acidic residues. Residues 1594 to 1616 (GRTRGRTLRARPARLPVRKARPC) are compositionally biased toward basic residues.

It localises to the secreted. The protein resides in the cell wall. Its subcellular location is the S-layer. In terms of biological role, the S-layer is a paracrystalline mono-layered assembly of proteins which coats the surface of bacteria. May play a role in the export of butirosin from the organism. This Niallia circulans (Bacillus circulans) protein is S-layer-related protein (butB).